Here is a 453-residue protein sequence, read N- to C-terminus: Ubiquitin-associated protein 1 (453 aa).

Residues 19–65 form the UMA domain; that stretch reads LDDVPFKLNEKFRCPSKVGLPIGFCLSDCNAILSDLQYDFNLERRTV. Residues 83 to 93 are compositionally biased toward basic and acidic residues; sequence EAIRTDSESER. Disordered regions lie at residues 83-119, 189-223, and 260-335; these read EAIR…QDIV, LQSQ…AKTG, and FPKL…AGTT. Positions 189–199 are enriched in low complexity; it reads LQSQPQSSVSP. Polar residues predominate over residues 285 to 328; it reads NLSNGTPPSLQRTASNNNTTLPQEQPVFAQNGTPKQSNPVTVTS. UBA domains lie at 340-381 and 403-449; these read SPSE…LFTH and GSEE…LMTR.

In terms of assembly, component of an ESCRT-I complex (endosomal sorting complex required for transport I).

Its subcellular location is the cytoplasm. The protein localises to the cytosol. It localises to the endosome. Its function is as follows. Component of the ESCRT-I complex, a regulator of vesicular trafficking process. Binds to ubiquitinated cargo proteins and is required for the sorting of endocytic ubiquitinated cargos into multivesicular bodies (MVBs). This is Ubiquitin-associated protein 1 from Danio rerio (Zebrafish).